Here is a 411-residue protein sequence, read N- to C-terminus: Na(+)-translocating NADH-quinone reductase subunit F (411 aa).

A helical transmembrane segment spans residues 6 to 26 (AIGGVAMFTLIIMSFVAIILA). Residues 35 to 129 (GDVTIHINDN…DMKIEIDPEF (95 aa)) form the 2Fe-2S ferredoxin-type domain. [2Fe-2S] cluster is bound by residues Cys72, Cys78, Cys81, and Cys113. An FAD-binding FR-type domain is found at 132-273 (VQKWECEVIS…SGPYGEFFAK (142 aa)).

The protein belongs to the NqrF family. As to quaternary structure, composed of six subunits; NqrA, NqrB, NqrC, NqrD, NqrE and NqrF. [2Fe-2S] cluster is required as a cofactor. It depends on FAD as a cofactor.

The protein resides in the cell inner membrane. The catalysed reaction is a ubiquinone + n Na(+)(in) + NADH + H(+) = a ubiquinol + n Na(+)(out) + NAD(+). Functionally, NQR complex catalyzes the reduction of ubiquinone-1 to ubiquinol by two successive reactions, coupled with the transport of Na(+) ions from the cytoplasm to the periplasm. The first step is catalyzed by NqrF, which accepts electrons from NADH and reduces ubiquinone-1 to ubisemiquinone by a one-electron transfer pathway. The sequence is that of Na(+)-translocating NADH-quinone reductase subunit F from Psychrobacter arcticus (strain DSM 17307 / VKM B-2377 / 273-4).